The sequence spans 193 residues: ATP synthase subunit delta (193 aa).

The protein belongs to the ATPase delta chain family. In terms of assembly, F-type ATPases have 2 components, F(1) - the catalytic core - and F(0) - the membrane proton channel. F(1) has five subunits: alpha(3), beta(3), gamma(1), delta(1), epsilon(1). F(0) has three main subunits: a(1), b(2) and c(10-14). The alpha and beta chains form an alternating ring which encloses part of the gamma chain. F(1) is attached to F(0) by a central stalk formed by the gamma and epsilon chains, while a peripheral stalk is formed by the delta and b chains.

The protein resides in the cell inner membrane. Its function is as follows. F(1)F(0) ATP synthase produces ATP from ADP in the presence of a proton or sodium gradient. F-type ATPases consist of two structural domains, F(1) containing the extramembraneous catalytic core and F(0) containing the membrane proton channel, linked together by a central stalk and a peripheral stalk. During catalysis, ATP synthesis in the catalytic domain of F(1) is coupled via a rotary mechanism of the central stalk subunits to proton translocation. This protein is part of the stalk that links CF(0) to CF(1). It either transmits conformational changes from CF(0) to CF(1) or is implicated in proton conduction. The protein is ATP synthase subunit delta of Allorhizobium ampelinum (strain ATCC BAA-846 / DSM 112012 / S4) (Agrobacterium vitis (strain S4)).